We begin with the raw amino-acid sequence, 294 residues long: Nucleotide-binding protein Smal_0950 (294 aa).

Residue 16-23 coordinates ATP; that stretch reads GLSGSGKS. 69-72 is a GTP binding site; the sequence is DVRG.

This sequence belongs to the RapZ-like family.

In terms of biological role, displays ATPase and GTPase activities. The protein is Nucleotide-binding protein Smal_0950 of Stenotrophomonas maltophilia (strain R551-3).